A 243-amino-acid chain; its full sequence is Ice-binding protein K1-A (243 aa).

Residues 1 to 20 form the signal peptide; it reads MFSSTYLLAIIALAVSSVFA.

The protein belongs to the ice-binding protein family.

It is found in the secreted. Its function is as follows. Binds to the surface of ice crystals. Inhibits growth of the ice crystals. Has antifreeze activity for survival under snow cover. Has high thermal hysteresis (TH) activity, which is the ability to lower the freezing point of an aqueous solution below its melting point, and thus the freezing of the cell fluid can be prevented protecting the organism from ice damage. The TH activity of this protein is 2.0 degrees Celsius at 0.11 mM. This Typhula ishikariensis (Gray snow mold fungus) protein is Ice-binding protein K1-A.